The primary structure comprises 712 residues: Potassium transporter 1 (712 aa).

The Cytoplasmic portion of the chain corresponds to 1–19 (MNQSPSLIEQGISQQHLKT). A helical membrane pass occupies residues 20–40 (LSCANVLTLAYQSLGVIYGDL). The Extracellular segment spans residues 41–67 (STSPLYVYKTTFSGKLSLHEDDEEIFG). Residues 68 to 88 (VFSFIFWTFTLIALFKYVFIV) form a helical membrane-spanning segment. At 89 to 154 (LSADDNGEGG…FFEKHPKSQK (66 aa)) the chain is on the cytoplasmic side. The helical transmembrane segment at 155–175 (CLLLFVLLGTCMAIGDSVLTP) threads the bilayer. Over 176–189 (TISVLSAVSGVKLK) the chain is Extracellular. Residues 190–210 (IPNLHENYVVIIACIILVAIF) traverse the membrane as a helical segment. At 211–219 (SVQRYGTHR) the chain is on the cytoplasmic side. A helical membrane pass occupies residues 220–240 (VAFIFAPISTAWLLSISSIGV). Residues 241–267 (YNTIKWNPRIVSALSPVYMYKFLRSTG) lie on the Extracellular side of the membrane. Residues 268 to 288 (VEGWVSLGGVVLSITGVETMF) traverse the membrane as a helical segment. The Cytoplasmic portion of the chain corresponds to 289-300 (ADLGHFSSLSIK). Residues 301–321 (VAFSFFVYPCLILAYMGEAAF) form a helical membrane-spanning segment. Over 322–340 (LSKHHEDIQQSFYKAIPEP) the chain is Extracellular. Residues 341 to 361 (VFWPVFIVATFAAVVGSQAVI) traverse the membrane as a helical segment. Over 362–392 (SATFSIISQCCALDCFPRVKIIHTSSKIHGQ) the chain is Cytoplasmic. Residues 393–413 (IYIPEVNWMLMCLCLAVTIGL) form a helical membrane-spanning segment. Topologically, residues 414–424 (RDTNMMGHAYG) are extracellular. The helical transmembrane segment at 425-445 (LAVTSVMLVTTCLMTLVMTIV) threads the bilayer. Residues 446–449 (WKQR) lie on the Cytoplasmic side of the membrane. A helical transmembrane segment spans residues 450 to 470 (IITVLAFVVFFGSIELLYFSS). Over 471–474 (CVYK) the chain is Extracellular. The helical transmembrane segment at 475–495 (VPEGGWIPILLSLTFMAVMYI) threads the bilayer. Residues 496 to 712 (WNYGTTKKHE…LLEVGMVYYV (217 aa)) are Cytoplasmic-facing.

It belongs to the HAK/KUP transporter (TC 2.A.72.3) family. In terms of tissue distribution, detected in the whole mature plant but preferentially expressed in roots and stems, and in potassium-starved plants.

The protein resides in the cell membrane. Its function is as follows. High-affinity potassium transporter that could play a major role in the uptake of potassium from the rhizosphere. May act as a low-affinity potassium transporter under high potassium concentrations. Could also transport rubidium. The protein is Potassium transporter 1 (POT1) of Arabidopsis thaliana (Mouse-ear cress).